Here is a 530-residue protein sequence, read N- to C-terminus: UDP-glucuronosyltransferase 2B31 (530 aa).

An N-terminal signal peptide occupies residues 1–24 (MSMKWISVLLGLQLSCYFSSGSCG). Lys-136 is subject to N6-succinyllysine. Residue Asn-316 is glycosylated (N-linked (GlcNAc...) asparagine). The helical transmembrane segment at 495-515 (IGFLLACVATAIFVTTQCCLF) threads the bilayer.

The protein belongs to the UDP-glycosyltransferase family.

The protein localises to the microsome membrane. The protein resides in the endoplasmic reticulum membrane. It catalyses the reaction glucuronate acceptor + UDP-alpha-D-glucuronate = acceptor beta-D-glucuronoside + UDP + H(+). Functionally, UDPGTs are of major importance in the conjugation and subsequent elimination of potentially toxic xenobiotics and endogenous compounds. This isozyme has glucuronidating capacity on phenols, opioids, and carboxylic acid-containing drugs. The polypeptide is UDP-glucuronosyltransferase 2B31 (UGT2B31) (Canis lupus familiaris (Dog)).